We begin with the raw amino-acid sequence, 200 residues long: Recombination protein RecR (200 aa).

Residues 57-72 (CRQCRTLTEDELCPQC) form a C4-type zinc finger. The Toprim domain maps to 80–175 (TLLCVVEGPM…ITSRIAHGVP (96 aa)).

It belongs to the RecR family.

Functionally, may play a role in DNA repair. It seems to be involved in an RecBC-independent recombinational process of DNA repair. It may act with RecF and RecO. This is Recombination protein RecR from Pseudomonas fluorescens (strain ATCC BAA-477 / NRRL B-23932 / Pf-5).